The primary structure comprises 470 residues: Acetyl-CoA decarbonylase/synthase complex subunit beta 2 (470 aa).

[Ni-Fe-S] cluster is bound by residues Cys190, Cys193, Cys279, and Cys281.

Belongs to the CdhC family. In terms of assembly, monomer. The ACDS complex is made up of alpha, epsilon, beta, gamma and delta chains with a probable stoichiometry of (alpha(2)epsilon(2))(4)-beta(8)-(gamma(1)delta(1))(8) (Potential). The cofactor is [Ni-Fe-S] cluster.

The catalysed reaction is Co(I)-[corrinoid Fe-S protein] + acetyl-CoA + H(+) = methyl-Co(III)-[corrinoid Fe-S protein] + CO + CoA. It functions in the pathway one-carbon metabolism; methanogenesis from acetate. Functionally, part of a complex that catalyzes the reversible cleavage of acetyl-CoA, allowing growth on acetate as sole source of carbon and energy. The alpha-epsilon complex generates CO from CO(2), while the beta subunit (this protein) combines the CO with CoA and a methyl group to form acetyl-CoA. The methyl group, which is incorporated into acetyl-CoA, is transferred to the beta subunit by a corrinoid iron-sulfur protein (the gamma-delta complex). The polypeptide is Acetyl-CoA decarbonylase/synthase complex subunit beta 2 (cdhC2) (Methanosarcina mazei (strain ATCC BAA-159 / DSM 3647 / Goe1 / Go1 / JCM 11833 / OCM 88) (Methanosarcina frisia)).